Here is a 194-residue protein sequence, read N- to C-terminus: Imidazoleglycerol-phosphate dehydratase (194 aa).

This sequence belongs to the imidazoleglycerol-phosphate dehydratase family.

The protein resides in the cytoplasm. The enzyme catalyses D-erythro-1-(imidazol-4-yl)glycerol 3-phosphate = 3-(imidazol-4-yl)-2-oxopropyl phosphate + H2O. It participates in amino-acid biosynthesis; L-histidine biosynthesis; L-histidine from 5-phospho-alpha-D-ribose 1-diphosphate: step 6/9. This is Imidazoleglycerol-phosphate dehydratase from Lactiplantibacillus plantarum (strain ATCC BAA-793 / NCIMB 8826 / WCFS1) (Lactobacillus plantarum).